The chain runs to 134 residues: DNA-directed RNA polymerase subunit omega (134 aa).

The protein belongs to the RNA polymerase subunit omega family. As to quaternary structure, the RNAP catalytic core consists of 2 alpha, 1 beta, 1 beta' and 1 omega subunit. When a sigma factor is associated with the core the holoenzyme is formed, which can initiate transcription.

The enzyme catalyses RNA(n) + a ribonucleoside 5'-triphosphate = RNA(n+1) + diphosphate. Promotes RNA polymerase assembly. Latches the N- and C-terminal regions of the beta' subunit thereby facilitating its interaction with the beta and alpha subunits. The protein is DNA-directed RNA polymerase subunit omega of Rhizobium johnstonii (strain DSM 114642 / LMG 32736 / 3841) (Rhizobium leguminosarum bv. viciae).